We begin with the raw amino-acid sequence, 375 residues long: Succinyl-diaminopimelate desuccinylase (375 aa).

Residue His-66 participates in Zn(2+) binding. Residue Asp-68 is part of the active site. Asp-99 is a binding site for Zn(2+). The Proton acceptor role is filled by Glu-133. Residues Glu-134, Glu-162, and His-348 each contribute to the Zn(2+) site.

The protein belongs to the peptidase M20A family. DapE subfamily. Homodimer. Zn(2+) is required as a cofactor. Co(2+) serves as cofactor.

It catalyses the reaction N-succinyl-(2S,6S)-2,6-diaminopimelate + H2O = (2S,6S)-2,6-diaminopimelate + succinate. It functions in the pathway amino-acid biosynthesis; L-lysine biosynthesis via DAP pathway; LL-2,6-diaminopimelate from (S)-tetrahydrodipicolinate (succinylase route): step 3/3. Functionally, catalyzes the hydrolysis of N-succinyl-L,L-diaminopimelic acid (SDAP), forming succinate and LL-2,6-diaminopimelate (DAP), an intermediate involved in the bacterial biosynthesis of lysine and meso-diaminopimelic acid, an essential component of bacterial cell walls. The chain is Succinyl-diaminopimelate desuccinylase from Klebsiella pneumoniae subsp. pneumoniae (strain ATCC 700721 / MGH 78578).